A 122-amino-acid polypeptide reads, in one-letter code: UPF0231 protein VP2494 (122 aa).

The protein belongs to the UPF0231 family.

The polypeptide is UPF0231 protein VP2494 (Vibrio parahaemolyticus serotype O3:K6 (strain RIMD 2210633)).